A 323-amino-acid polypeptide reads, in one-letter code: HTH-type transcriptional activator CmpR (323 aa).

Residues 4–61 (LTLHQLKVFEAAARHSSFTRAAEELYLTQPTVSIQVKQLTKAVGLPLFEQIGKRLYLT) enclose the HTH lysR-type domain. The segment at residues 21–40 (FTRAAEELYLTQPTVSIQVK) is a DNA-binding region (H-T-H motif). Residues 304–323 (IPESTTTDPELDAPQPVVGV) form a disordered region.

Belongs to the LysR transcriptional regulatory family.

The protein resides in the cytoplasm. Functionally, activates transcription of the cmpABCD operon under carbon dioxide-limited conditions. The chain is HTH-type transcriptional activator CmpR (cmpR) from Synechococcus elongatus (strain ATCC 33912 / PCC 7942 / FACHB-805) (Anacystis nidulans R2).